A 317-amino-acid polypeptide reads, in one-letter code: L-lactate dehydrogenase (317 aa).

NAD(+) is bound by residues valine 17, aspartate 38, lysine 43, tyrosine 69, and 83 to 84; that span reads GA. Substrate-binding residues include glutamine 86 and arginine 92. Residues serine 105, 122-124, and serine 147 contribute to the NAD(+) site; that span reads ATN. Residue 124–127 coordinates substrate; it reads NPVD. 152-155 is a substrate binding site; it reads DTAR. Beta-D-fructose 1,6-bisphosphate-binding residues include arginine 157 and histidine 172. Catalysis depends on histidine 179, which acts as the Proton acceptor. The residue at position 224 (tyrosine 224) is a Phosphotyrosine. Threonine 233 is a binding site for substrate.

This sequence belongs to the LDH/MDH superfamily. LDH family. In terms of assembly, homotetramer.

The protein localises to the cytoplasm. It carries out the reaction (S)-lactate + NAD(+) = pyruvate + NADH + H(+). It functions in the pathway fermentation; pyruvate fermentation to lactate; (S)-lactate from pyruvate: step 1/1. Its activity is regulated as follows. Allosterically activated by fructose 1,6-bisphosphate (FBP). Functionally, catalyzes the conversion of lactate to pyruvate. This chain is L-lactate dehydrogenase, found in Bacillus caldolyticus.